Consider the following 157-residue polypeptide: Ribonuclease H (157 aa).

In terms of domain architecture, RNase H type-1 spans 1–146 (MPDLFAYTDG…ADELARAGMA (146 aa)). Aspartate 9, glutamate 52, aspartate 74, and aspartate 138 together coordinate Mg(2+).

The protein belongs to the RNase H family. Monomer. Requires Mg(2+) as cofactor.

It localises to the cytoplasm. The catalysed reaction is Endonucleolytic cleavage to 5'-phosphomonoester.. In terms of biological role, endonuclease that specifically degrades the RNA of RNA-DNA hybrids. The protein is Ribonuclease H of Ruegeria sp. (strain TM1040) (Silicibacter sp.).